The chain runs to 212 residues: Kynurenine formamidase (212 aa).

W18 lines the substrate pocket. H48, H52, and D54 together coordinate Zn(2+). Residue H58 is the Proton donor/acceptor of the active site. H160 and E172 together coordinate Zn(2+).

It belongs to the Cyclase 1 superfamily. KynB family. In terms of assembly, homodimer. The cofactor is Zn(2+).

The enzyme catalyses N-formyl-L-kynurenine + H2O = L-kynurenine + formate + H(+). Its pathway is amino-acid degradation; L-tryptophan degradation via kynurenine pathway; L-kynurenine from L-tryptophan: step 2/2. Catalyzes the hydrolysis of N-formyl-L-kynurenine to L-kynurenine, the second step in the kynurenine pathway of tryptophan degradation. This Paraburkholderia xenovorans (strain LB400) protein is Kynurenine formamidase.